The following is a 240-amino-acid chain: UDP-2,3-diacylglucosamine hydrolase (240 aa).

5 residues coordinate Mn(2+): D8, H10, D41, N78, and H113. A substrate-binding site is contributed by 78–79 (NR). Substrate-binding residues include D121, S159, N163, K166, and H194. Residues H194 and H196 each coordinate Mn(2+).

It belongs to the LpxH family. The cofactor is Mn(2+).

Its subcellular location is the cell inner membrane. It carries out the reaction UDP-2-N,3-O-bis[(3R)-3-hydroxytetradecanoyl]-alpha-D-glucosamine + H2O = 2-N,3-O-bis[(3R)-3-hydroxytetradecanoyl]-alpha-D-glucosaminyl 1-phosphate + UMP + 2 H(+). The protein operates within glycolipid biosynthesis; lipid IV(A) biosynthesis; lipid IV(A) from (3R)-3-hydroxytetradecanoyl-[acyl-carrier-protein] and UDP-N-acetyl-alpha-D-glucosamine: step 4/6. Hydrolyzes the pyrophosphate bond of UDP-2,3-diacylglucosamine to yield 2,3-diacylglucosamine 1-phosphate (lipid X) and UMP by catalyzing the attack of water at the alpha-P atom. Involved in the biosynthesis of lipid A, a phosphorylated glycolipid that anchors the lipopolysaccharide to the outer membrane of the cell. The polypeptide is UDP-2,3-diacylglucosamine hydrolase (Shewanella baltica (strain OS223)).